Reading from the N-terminus, the 38-residue chain is Large ribosomal subunit protein bL36 (38 aa).

It belongs to the bacterial ribosomal protein bL36 family.

This is Large ribosomal subunit protein bL36 from Acholeplasma laidlawii (strain PG-8A).